Reading from the N-terminus, the 851-residue chain is Beta-galactosidase 3 (851 aa).

An N-terminal signal peptide occupies residues 1–29 (MAGASSYFSLRRLLLLLLPLVPLLGATTA). N35 carries N-linked (GlcNAc...) asparagine glycosylation. The Proton donor role is filled by E194. The active-site Nucleophile is the E263. Residues N361, N475, N528, and N533 are each glycosylated (N-linked (GlcNAc...) asparagine). Residues 765–851 (GRDAAKVQLS…KTLAIEADCS (87 aa)) form the SUEL-type lectin domain.

It belongs to the glycosyl hydrolase 35 family.

Its subcellular location is the secreted. The protein localises to the extracellular space. The protein resides in the apoplast. The catalysed reaction is Hydrolysis of terminal non-reducing beta-D-galactose residues in beta-D-galactosides.. This Oryza sativa subsp. japonica (Rice) protein is Beta-galactosidase 3.